The following is a 785-amino-acid chain: Mitochondrial intermediate peptidase (785 aa).

A mitochondrion-targeting transit peptide spans 1–27; that stretch reads MLKAVMPRPWVCSRCVKRQIQSSRGLA. Residues 26–52 form a disordered region; the sequence is LATASTQYREPRPVPTDHSAPGAKHDD. His566 lines the Zn(2+) pocket. The active site involves Glu567. Residues His570 and His573 each contribute to the Zn(2+) site.

The protein belongs to the peptidase M3 family. Zn(2+) is required as a cofactor.

It localises to the mitochondrion matrix. The enzyme catalyses Release of an N-terminal octapeptide as second stage of processing of some proteins imported into the mitochondrion.. In terms of biological role, cleaves proteins, imported into the mitochondrion, to their mature size. While most mitochondrial precursor proteins are processed to the mature form in one step by mitochondrial processing peptidase (MPP), the sequential cleavage by MIP of an octapeptide after initial processing by MPP is a required step for a subgroup of nuclear-encoded precursor proteins destined for the matrix or the inner membrane. This Sclerotinia sclerotiorum (strain ATCC 18683 / 1980 / Ss-1) (White mold) protein is Mitochondrial intermediate peptidase (oct1).